A 533-amino-acid chain; its full sequence is Zinc finger protein 692 (533 aa).

2 disordered regions span residues Ser-124–Leu-251 and Thr-290–Glu-310. The span at Glu-149–Pro-178 shows a compositional bias: basic and acidic residues. Over residues Gln-190–Leu-208 the composition is skewed to acidic residues. Ser-233 is subject to Phosphoserine. The span at Thr-290–Asn-305 shows a compositional bias: polar residues. 5 consecutive C2H2-type zinc fingers follow at residues Met-329–His-354, Phe-360–His-384, Tyr-390–His-412, Leu-418–His-440, and Phe-449–His-472. Residue Ser-471 is modified to Phosphoserine. The tract at residues Val-478–Ser-533 is disordered. The segment covering Ser-481–Ser-492 has biased composition (low complexity). Residues Pro-500–Ser-521 show a composition bias toward polar residues.

Belongs to the krueppel C2H2-type zinc-finger protein family. Post-translationally, phosphorylation at Ser-471 results in loss of DNA-binding activity.

Its subcellular location is the nucleus. In terms of biological role, may act as an transcriptional repressor for PCK1 gene expression, in turns may participate in the hepatic gluconeogenesis regulation through the activated AMPK signaling pathway. The polypeptide is Zinc finger protein 692 (Rattus norvegicus (Rat)).